A 223-amino-acid polypeptide reads, in one-letter code: Putative N-acetylmannosamine-6-phosphate 2-epimerase (223 aa).

The protein belongs to the NanE family.

The enzyme catalyses an N-acyl-D-glucosamine 6-phosphate = an N-acyl-D-mannosamine 6-phosphate. Its pathway is amino-sugar metabolism; N-acetylneuraminate degradation; D-fructose 6-phosphate from N-acetylneuraminate: step 3/5. Functionally, converts N-acetylmannosamine-6-phosphate (ManNAc-6-P) to N-acetylglucosamine-6-phosphate (GlcNAc-6-P). This chain is Putative N-acetylmannosamine-6-phosphate 2-epimerase, found in Clostridioides difficile (strain 630) (Peptoclostridium difficile).